Here is a 535-residue protein sequence, read N- to C-terminus: Genetic interactor of prohibitins 3, mitochondrial (535 aa).

The N-terminal 38 residues, 1–38, are a transit peptide targeting the mitochondrion; it reads MLPVSRLCVRSSLRKLVFVRFVSCTSCGVTLQNNNVRG. In terms of domain architecture, CP-type G spans 111 to 283; the sequence is MQEVYRHVPA…INDLPGYSTN (173 aa).

The protein belongs to the TRAFAC class YlqF/YawG GTPase family. GEP3 subfamily.

The protein localises to the mitochondrion. Functionally, may be involved in the mitochondrial lipid metabolism. In Lachancea thermotolerans (strain ATCC 56472 / CBS 6340 / NRRL Y-8284) (Yeast), this protein is Genetic interactor of prohibitins 3, mitochondrial (GEP3).